The chain runs to 571 residues: Sulfite reductase [NADPH] hemoprotein beta-component (571 aa).

[4Fe-4S] cluster contacts are provided by Cys-436, Cys-442, Cys-481, and Cys-485. Residue Cys-485 participates in siroheme binding.

This sequence belongs to the nitrite and sulfite reductase 4Fe-4S domain family. As to quaternary structure, alpha(8)-beta(8). The alpha component is a flavoprotein, the beta component is a hemoprotein. It depends on siroheme as a cofactor. Requires [4Fe-4S] cluster as cofactor.

The enzyme catalyses hydrogen sulfide + 3 NADP(+) + 3 H2O = sulfite + 3 NADPH + 4 H(+). It participates in sulfur metabolism; hydrogen sulfide biosynthesis; hydrogen sulfide from sulfite (NADPH route): step 1/1. Functionally, component of the sulfite reductase complex that catalyzes the 6-electron reduction of sulfite to sulfide. This is one of several activities required for the biosynthesis of L-cysteine from sulfate. The polypeptide is Sulfite reductase [NADPH] hemoprotein beta-component (Anoxybacillus flavithermus (strain DSM 21510 / WK1)).